The chain runs to 85 residues: Toxin Cll6 (85 aa).

A signal peptide spans 1–19; the sequence is MNSLLMIIGCLVLIGTVWT. The LCN-type CS-alpha/beta domain occupies 20 to 83; the sequence is KEGYLVNMKT…TWPLPGKSCS (64 aa). Cystine bridges form between C31–C82, C35–C58, C44–C63, and C48–C65. S83 carries the post-translational modification Serine amide.

Belongs to the long (4 C-C) scorpion toxin superfamily. Sodium channel inhibitor family. Beta subfamily. Expressed by the venom gland.

The protein localises to the secreted. Beta toxins bind voltage-independently at site-4 of sodium channels (Nav) and shift the voltage of activation toward more negative potentials thereby affecting sodium channel activation and promoting spontaneous and repetitive firing. The polypeptide is Toxin Cll6 (Centruroides limpidus (Mexican scorpion)).